A 410-amino-acid polypeptide reads, in one-letter code: D-3-phosphoglycerate dehydrogenase (410 aa).

NAD(+) is bound by residues 162 to 163, Asp182, 239 to 241, and Asp265; these read HI and AAR. Arg241 is a catalytic residue. Glu270 is a catalytic residue. His293 serves as the catalytic Proton donor. 293 to 296 contributes to the NAD(+) binding site; sequence HIGG. Residues 341–410 form the ACT domain; the sequence is RLLHIHENRP…DGTIRARVLY (70 aa).

This sequence belongs to the D-isomer specific 2-hydroxyacid dehydrogenase family.

It catalyses the reaction (2R)-3-phosphoglycerate + NAD(+) = 3-phosphooxypyruvate + NADH + H(+). The catalysed reaction is (R)-2-hydroxyglutarate + NAD(+) = 2-oxoglutarate + NADH + H(+). It functions in the pathway amino-acid biosynthesis; L-serine biosynthesis; L-serine from 3-phospho-D-glycerate: step 1/3. With respect to regulation, in bacteria displays feedback inhibition by L-serine. Its function is as follows. Catalyzes the reversible oxidation of 3-phospho-D-glycerate to 3-phosphonooxypyruvate, the first step of the phosphorylated L-serine biosynthesis pathway. Also catalyzes the reversible oxidation of 2-hydroxyglutarate to 2-oxoglutarate. This is D-3-phosphoglycerate dehydrogenase (serA) from Haemophilus influenzae (strain ATCC 51907 / DSM 11121 / KW20 / Rd).